We begin with the raw amino-acid sequence, 89 residues long: Extender of the chronological lifespan protein ecl3 (89 aa).

Belongs to the ecl1 family.

The protein resides in the nucleus. Functionally, involved in chronological cell aging. This is Extender of the chronological lifespan protein ecl3 (ecl3) from Schizosaccharomyces pombe (strain 972 / ATCC 24843) (Fission yeast).